A 270-amino-acid chain; its full sequence is Tryptophan synthase alpha chain (270 aa).

Residues glutamate 60 and aspartate 71 each act as proton acceptor in the active site.

It belongs to the TrpA family. In terms of assembly, tetramer of two alpha and two beta chains.

It carries out the reaction (1S,2R)-1-C-(indol-3-yl)glycerol 3-phosphate + L-serine = D-glyceraldehyde 3-phosphate + L-tryptophan + H2O. The protein operates within amino-acid biosynthesis; L-tryptophan biosynthesis; L-tryptophan from chorismate: step 5/5. In terms of biological role, the alpha subunit is responsible for the aldol cleavage of indoleglycerol phosphate to indole and glyceraldehyde 3-phosphate. This is Tryptophan synthase alpha chain from Deinococcus radiodurans (strain ATCC 13939 / DSM 20539 / JCM 16871 / CCUG 27074 / LMG 4051 / NBRC 15346 / NCIMB 9279 / VKM B-1422 / R1).